Consider the following 77-residue polypeptide: Large ribosomal subunit protein eL20 (77 aa).

Belongs to the eukaryotic ribosomal protein eL20 family. As to quaternary structure, part of the 50S ribosomal subunit. Binds 23S rRNA.

The sequence is that of Large ribosomal subunit protein eL20 from Thermococcus onnurineus (strain NA1).